The chain runs to 215 residues: Cytochrome b6 (215 aa).

The helical transmembrane segment at 32–52 (IFYCLGGITFTSFLVQVATGF) threads the bilayer. A heme c-binding site is contributed by cysteine 35. 2 residues coordinate heme b: histidine 86 and histidine 100. 3 helical membrane passes run 90–110 (ASMM…TGGF), 116–136 (LTWV…VTGY), and 186–206 (LHTF…FLMI). Heme b-binding residues include histidine 187 and histidine 202.

This sequence belongs to the cytochrome b family. PetB subfamily. The 4 large subunits of the cytochrome b6-f complex are cytochrome b6, subunit IV (17 kDa polypeptide, PetD), cytochrome f and the Rieske protein, while the 4 small subunits are PetG, PetL, PetM and PetN. The complex functions as a dimer. The cofactor is heme b. It depends on heme c as a cofactor.

The protein resides in the plastid. It is found in the chloroplast thylakoid membrane. Component of the cytochrome b6-f complex, which mediates electron transfer between photosystem II (PSII) and photosystem I (PSI), cyclic electron flow around PSI, and state transitions. The sequence is that of Cytochrome b6 from Oltmannsiellopsis viridis (Marine flagellate).